We begin with the raw amino-acid sequence, 112 residues long: T cell receptor alpha variable 2 (112 aa).

The first 25 residues, 1 to 25 (MALQSTLGAVWLGLLLNSLWKVAES), serve as a signal peptide directing secretion. The Ig-like domain occupies 26 to 112 (KDQVFQPSTV…DAAVYYCAVE (87 aa)). The cysteines at positions 47 and 109 are disulfide-linked. N48 and N84 each carry an N-linked (GlcNAc...) asparagine glycan.

As to quaternary structure, alpha-beta TR is a heterodimer composed of an alpha and beta chain; disulfide-linked. The alpha-beta TR is associated with the transmembrane signaling CD3 coreceptor proteins to form the TR-CD3 (TcR or TCR). The assembly of alpha-beta TR heterodimers with CD3 occurs in the endoplasmic reticulum where a single alpha-beta TR heterodimer associates with one CD3D-CD3E heterodimer, one CD3G-CD3E heterodimer and one CD247 homodimer forming a stable octameric structure. CD3D-CD3E and CD3G-CD3E heterodimers preferentially associate with TR alpha and TR beta chains, respectively. The association of the CD247 homodimer is the last step of TcR assembly in the endoplasmic reticulum and is required for transport to the cell surface.

Its subcellular location is the cell membrane. In terms of biological role, v region of the variable domain of T cell receptor (TR) alpha chain that participates in the antigen recognition. Alpha-beta T cell receptors are antigen specific receptors which are essential to the immune response and are present on the cell surface of T lymphocytes. Recognize peptide-major histocompatibility (MH) (pMH) complexes that are displayed by antigen presenting cells (APC), a prerequisite for efficient T cell adaptive immunity against pathogens. Binding of alpha-beta TR to pMH complex initiates TR-CD3 clustering on the cell surface and intracellular activation of LCK that phosphorylates the ITAM motifs of CD3G, CD3D, CD3E and CD247 enabling the recruitment of ZAP70. In turn ZAP70 phosphorylates LAT, which recruits numerous signaling molecules to form the LAT signalosome. The LAT signalosome propagates signal branching to three major signaling pathways, the calcium, the mitogen-activated protein kinase (MAPK) kinase and the nuclear factor NF-kappa-B (NF-kB) pathways, leading to the mobilization of transcription factors that are critical for gene expression and essential for T cell growth and differentiation. The T cell repertoire is generated in the thymus, by V-(D)-J rearrangement. This repertoire is then shaped by intrathymic selection events to generate a peripheral T cell pool of self-MH restricted, non-autoaggressive T cells. Post-thymic interaction of alpha-beta TR with the pMH complexes shapes TR structural and functional avidity. This is T cell receptor alpha variable 2 from Homo sapiens (Human).